The chain runs to 306 residues: tRNA dimethylallyltransferase (306 aa).

Position 9-16 (9-16) interacts with ATP; it reads GPTAVGKT. 11–16 contributes to the substrate binding site; it reads TAVGKT. Residues 34–37 form an interaction with substrate tRNA region; the sequence is DSRQ.

Belongs to the IPP transferase family. Monomer. The cofactor is Mg(2+).

The catalysed reaction is adenosine(37) in tRNA + dimethylallyl diphosphate = N(6)-dimethylallyladenosine(37) in tRNA + diphosphate. Its function is as follows. Catalyzes the transfer of a dimethylallyl group onto the adenine at position 37 in tRNAs that read codons beginning with uridine, leading to the formation of N6-(dimethylallyl)adenosine (i(6)A). The sequence is that of tRNA dimethylallyltransferase from Roseiflexus castenholzii (strain DSM 13941 / HLO8).